The primary structure comprises 272 residues: Phosphate import ATP-binding protein PstB (272 aa).

In terms of domain architecture, ABC transporter spans 26–267; that stretch reads IVVKNWNLYY…PQVKRTEDYI (242 aa). 58-65 provides a ligand contact to ATP; that stretch reads GPSGCGKS.

This sequence belongs to the ABC transporter superfamily. Phosphate importer (TC 3.A.1.7) family. As to quaternary structure, the complex is composed of two ATP-binding proteins (PstB), two transmembrane proteins (PstC and PstA) and a solute-binding protein (PstS).

Its subcellular location is the cell inner membrane. It catalyses the reaction phosphate(out) + ATP + H2O = ADP + 2 phosphate(in) + H(+). Part of the ABC transporter complex PstSACB involved in phosphate import. Responsible for energy coupling to the transport system. The chain is Phosphate import ATP-binding protein PstB from Hydrogenovibrio crunogenus (strain DSM 25203 / XCL-2) (Thiomicrospira crunogena).